A 542-amino-acid chain; its full sequence is Aspartate kinase FUB3 (542 aa).

ACT domains lie at 404–472 (ILSN…VLPD) and 478–542 (LVGA…KSAI).

It belongs to the aspartokinase family.

It carries out the reaction L-aspartate + ATP = 4-phospho-L-aspartate + ADP. It functions in the pathway mycotoxin biosynthesis. Its function is as follows. Aspartate kinase; part of the gene cluster that mediates the biosynthesis of fusaric acid, a mycotoxin with low to moderate toxicity to animals and humans, but with high phytotoxic properties. L-aspartate is suggested as fusaric acid amino acid precursor that is activated and further processed to O-acetyl-L-homoserine by cluster enzymes aspartate kinase FUB3 and homoserine O-acetyltransferase FUB5, as well as enzymes of the primary metabolism. The polyketide synthase (PKS) FUB1 generates the triketide trans-2-hexenal which is presumptively released by the hydrolase FUB4 and linked to the NRPS-bound amino acid precursor by NAD(P)-dependent dehydrogenase FUB6. FUB1, FUB4, and the non-canonical NRPS Fub8 may form an enzyme complex. Further processing of the NRPS-bound intermediate might be carried out by FUB6 and the sulfhydrylase FUB7, enabling a spontaneous electrocyclization to close the carbon backbone of fusaric acid. Dihydrofusaric acid is likely to be released via reduction by the thioester reductase (TR) domain of FUB8 whereupon the final oxidation to fusaric acid may (also) be performed by the FMN-dependent dehydrogenase FUB9. This is Aspartate kinase FUB3 from Fusarium oxysporum f. sp. lycopersici (strain 4287 / CBS 123668 / FGSC 9935 / NRRL 34936) (Fusarium vascular wilt of tomato).